Reading from the N-terminus, the 522-residue chain is Phosphatidylinositol 3,4,5-trisphosphate 3-phosphatase TPTE2 (522 aa).

Residues 1–11 (MNESPQTNEFK) show a composition bias toward polar residues. The tract at residues 1 to 28 (MNESPQTNEFKGTTEEAPAKESPHTSEF) is disordered. Basic and acidic residues predominate over residues 12 to 27 (GTTEEAPAKESPHTSE). Helical transmembrane passes span 66–86 (IVHSIVSSFAFGIFGVFLVLL), 111–131 (ISLAIGLFFLMDVLLRVFVEG), and 146–166 (AIIVIPLLVDVIYIFFDIKLL). The Phosphatase tensin-type domain occupies 210–386 (RRYTRDGFDL…GYFAQVKHLY (177 aa)). The active-site Phosphocysteine intermediate is the Cys-320. In terms of domain architecture, C2 tensin-type spans 393–522 (RRILFIKRFI…FAVEILFGEK (130 aa)).

Isoform 3 is expressed in testis, brain and stomach while isoform 4 seems to be testis-specific.

Its subcellular location is the endoplasmic reticulum membrane. It is found in the golgi apparatus membrane. It localises to the cytoplasm. The catalysed reaction is a 1,2-diacyl-sn-glycero-3-phospho-(1D-myo-inositol-3,4,5-trisphosphate) + H2O = a 1,2-diacyl-sn-glycero-3-phospho-(1D-myo-inositol-4,5-bisphosphate) + phosphate. In terms of biological role, acts as a lipid phosphatase, removing the phosphate in the D3 position of the inositol ring from phosphatidylinositol 3,4,5-trisphosphate. Functionally, shows no phosphoinositide phosphatase activity. This chain is Phosphatidylinositol 3,4,5-trisphosphate 3-phosphatase TPTE2 (TPTE2), found in Homo sapiens (Human).